Reading from the N-terminus, the 351-residue chain is Nicotinate-nucleotide--dimethylbenzimidazole phosphoribosyltransferase (351 aa).

The active-site Proton acceptor is glutamate 319.

The protein belongs to the CobT family.

It catalyses the reaction 5,6-dimethylbenzimidazole + nicotinate beta-D-ribonucleotide = alpha-ribazole 5'-phosphate + nicotinate + H(+). It participates in nucleoside biosynthesis; alpha-ribazole biosynthesis; alpha-ribazole from 5,6-dimethylbenzimidazole: step 1/2. In terms of biological role, catalyzes the synthesis of alpha-ribazole-5'-phosphate from nicotinate mononucleotide (NAMN) and 5,6-dimethylbenzimidazole (DMB). This Desulforamulus reducens (strain ATCC BAA-1160 / DSM 100696 / MI-1) (Desulfotomaculum reducens) protein is Nicotinate-nucleotide--dimethylbenzimidazole phosphoribosyltransferase.